A 273-amino-acid chain; its full sequence is 3-methyl-2-oxobutanoate hydroxymethyltransferase 3 (273 aa).

Asp-49 and Asp-88 together coordinate Mg(2+). Residues Asp-49 to Ser-50, Asp-88, and Lys-118 each bind 3-methyl-2-oxobutanoate. Glu-120 contacts Mg(2+). Glu-187 (proton acceptor) is an active-site residue.

Belongs to the PanB family. In terms of assembly, homodecamer; pentamer of dimers. Mg(2+) serves as cofactor.

Its subcellular location is the cytoplasm. The catalysed reaction is 3-methyl-2-oxobutanoate + (6R)-5,10-methylene-5,6,7,8-tetrahydrofolate + H2O = 2-dehydropantoate + (6S)-5,6,7,8-tetrahydrofolate. It participates in cofactor biosynthesis; (R)-pantothenate biosynthesis; (R)-pantoate from 3-methyl-2-oxobutanoate: step 1/2. Functionally, catalyzes the reversible reaction in which hydroxymethyl group from 5,10-methylenetetrahydrofolate is transferred onto alpha-ketoisovalerate to form ketopantoate. This Bradyrhizobium diazoefficiens (strain JCM 10833 / BCRC 13528 / IAM 13628 / NBRC 14792 / USDA 110) protein is 3-methyl-2-oxobutanoate hydroxymethyltransferase 3.